The primary structure comprises 420 residues: Tyrosine--tRNA ligase (420 aa).

Tyr38 is a binding site for L-tyrosine. The short motif at 43-52 is the 'HIGH' region element; the sequence is PTGDSLHIGH. 2 residues coordinate L-tyrosine: Tyr169 and Gln173. A 'KMSKS' region motif is present at residues 231–235; the sequence is KFGKS. Lys234 contacts ATP. Residues 353 to 419 enclose the S4 RNA-binding domain; the sequence is KNLVDFLVDT…GKRKYTLVTI (67 aa).

It belongs to the class-I aminoacyl-tRNA synthetase family. TyrS type 1 subfamily. In terms of assembly, homodimer.

The protein resides in the cytoplasm. The catalysed reaction is tRNA(Tyr) + L-tyrosine + ATP = L-tyrosyl-tRNA(Tyr) + AMP + diphosphate + H(+). Catalyzes the attachment of tyrosine to tRNA(Tyr) in a two-step reaction: tyrosine is first activated by ATP to form Tyr-AMP and then transferred to the acceptor end of tRNA(Tyr). In Lactobacillus helveticus (strain DPC 4571), this protein is Tyrosine--tRNA ligase.